A 512-amino-acid polypeptide reads, in one-letter code: MKTYKPYRHQLRRSLFASTIFPVFMVMIIGLISFYAIYIWVEHRTIHQHTYQTQTELQRIDKHFHTFVTQQQKQWRHVDLSHPADITKMKRQLLKQVHQQPAILYYDLKGSSQSFTNNYEQLDTTKMYLISKYRIDFKDDTYILKIYMSSTPLLKNIKKNSGQSALIVDSYDTVLYTNDDRFSIGQKYQPPQFGFMNESLKLNSHHAHLIIYKDIHETIEDGIALLVVMGVVLILLVIFGYISADRMAKRQSEDIEAIVRKIDDAKNRHLGSYEPLKKHSELEEINNYIYDLFESNEQLIQSIEQTERRLRDIQLKEIERQFQPHFLFNTMQTIQYLIPLSPKVAQTVIQQLSQMLRYSLRTASHTVKLAEELSYIEQYVAIQNIRFDDMIQLYIDATEGVQHQTIGKMMLQPLVENAIKHGRDSEPLKITIRIRLTKRKLHILVHDNGIGMSPSHLEHVRQSLHHDVFDTTHLGLNHLHNRAMIQYGTYARLHIFSRSQQGTLMCYQIPLV.

The next 2 membrane-spanning stretches (helical) occupy residues 20-40 (IFPVFMVMIIGLISFYAIYIW) and 222-242 (GIALLVVMGVVLILLVIFGYI). The Histidine kinase domain maps to 297–512 (EQLIQSIEQT…TLMCYQIPLV (216 aa)). Position 325 is a phosphohistidine; by autocatalysis (His325).

Post-translationally, autophosphorylated.

The protein localises to the cell membrane. The enzyme catalyses ATP + protein L-histidine = ADP + protein N-phospho-L-histidine.. Functionally, probable member of the two-component regulatory system SE_0166/SE_0165. May activate SE_0165 by phosphorylation. This is an uncharacterized protein from Staphylococcus epidermidis (strain ATCC 12228 / FDA PCI 1200).